A 199-amino-acid chain; its full sequence is Holliday junction branch migration complex subunit RuvA (199 aa).

Residues 1-62 (MIAYIKGLLA…EDGIQFFGFA (62 aa)) are domain I. The segment at 63–141 (KEDEKECFLL…GMAAVEHSTL (79 aa)) is domain II. The tract at residues 142–152 (QQSVITTGSGD) is flexible linker. A domain III region spans residues 152 to 199 (DEAVEALLALGYSQGEARDAVKKAQKSAPEEDLSALIKIALKELAPSR).

It belongs to the RuvA family. As to quaternary structure, homotetramer. Forms an RuvA(8)-RuvB(12)-Holliday junction (HJ) complex. HJ DNA is sandwiched between 2 RuvA tetramers; dsDNA enters through RuvA and exits via RuvB. An RuvB hexamer assembles on each DNA strand where it exits the tetramer. Each RuvB hexamer is contacted by two RuvA subunits (via domain III) on 2 adjacent RuvB subunits; this complex drives branch migration. In the full resolvosome a probable DNA-RuvA(4)-RuvB(12)-RuvC(2) complex forms which resolves the HJ.

It localises to the cytoplasm. Functionally, the RuvA-RuvB-RuvC complex processes Holliday junction (HJ) DNA during genetic recombination and DNA repair, while the RuvA-RuvB complex plays an important role in the rescue of blocked DNA replication forks via replication fork reversal (RFR). RuvA specifically binds to HJ cruciform DNA, conferring on it an open structure. The RuvB hexamer acts as an ATP-dependent pump, pulling dsDNA into and through the RuvAB complex. HJ branch migration allows RuvC to scan DNA until it finds its consensus sequence, where it cleaves and resolves the cruciform DNA. The polypeptide is Holliday junction branch migration complex subunit RuvA (Desulforamulus reducens (strain ATCC BAA-1160 / DSM 100696 / MI-1) (Desulfotomaculum reducens)).